We begin with the raw amino-acid sequence, 350 residues long: Arginine N-succinyltransferase (350 aa).

Leu125 contributes to the succinyl-CoA binding site. His229 (proton donor) is an active-site residue.

It belongs to the arginine N-succinyltransferase family.

It carries out the reaction succinyl-CoA + L-arginine = N(2)-succinyl-L-arginine + CoA + H(+). It functions in the pathway amino-acid degradation; L-arginine degradation via AST pathway; L-glutamate and succinate from L-arginine: step 1/5. In terms of biological role, catalyzes the transfer of succinyl-CoA to arginine to produce N(2)-succinylarginine. The protein is Arginine N-succinyltransferase of Yersinia pseudotuberculosis serotype O:3 (strain YPIII).